Here is a 107-residue protein sequence, read N- to C-terminus: Phosphoribosyl-ATP pyrophosphatase (107 aa).

This sequence belongs to the PRA-PH family.

The protein localises to the cytoplasm. It carries out the reaction 1-(5-phospho-beta-D-ribosyl)-ATP + H2O = 1-(5-phospho-beta-D-ribosyl)-5'-AMP + diphosphate + H(+). The protein operates within amino-acid biosynthesis; L-histidine biosynthesis; L-histidine from 5-phospho-alpha-D-ribose 1-diphosphate: step 2/9. The protein is Phosphoribosyl-ATP pyrophosphatase (hisE) of Neisseria meningitidis serogroup A / serotype 4A (strain DSM 15465 / Z2491).